Reading from the N-terminus, the 182-residue chain is Probable nicotinate-nucleotide adenylyltransferase (182 aa).

Belongs to the NadD family.

It catalyses the reaction nicotinate beta-D-ribonucleotide + ATP + H(+) = deamido-NAD(+) + diphosphate. Its pathway is cofactor biosynthesis; NAD(+) biosynthesis; deamido-NAD(+) from nicotinate D-ribonucleotide: step 1/1. Its function is as follows. Catalyzes the reversible adenylation of nicotinate mononucleotide (NaMN) to nicotinic acid adenine dinucleotide (NaAD). The protein is Probable nicotinate-nucleotide adenylyltransferase of Aliarcobacter butzleri (strain RM4018) (Arcobacter butzleri).